A 222-amino-acid polypeptide reads, in one-letter code: GTP cyclohydrolase 1 (222 aa).

Cysteine 111, histidine 114, and cysteine 182 together coordinate Zn(2+).

Belongs to the GTP cyclohydrolase I family. As to quaternary structure, homomer.

It carries out the reaction GTP + H2O = 7,8-dihydroneopterin 3'-triphosphate + formate + H(+). The protein operates within cofactor biosynthesis; 7,8-dihydroneopterin triphosphate biosynthesis; 7,8-dihydroneopterin triphosphate from GTP: step 1/1. This chain is GTP cyclohydrolase 1, found in Klebsiella pneumoniae (strain 342).